The following is a 315-amino-acid chain: COMPASS component SWD3 (315 aa).

6 WD repeats span residues 53 to 93, 94 to 133, 136 to 178, 187 to 228, 238 to 278, and 285 to 315; these read SHAR…HTFI, GHTA…LMKT, AHSE…KTLT, NGVV…RTFQ, HHSC…LLQL, and HHSS…WRWV.

In terms of assembly, component of the Set1C/COMPASS complex which consists of SET1(2), BRE2(2), SPP1(2), SDC1(1), SHG1(1), SWD1(1), SWD2(1), and SWD3(1).

The protein resides in the nucleus. The protein localises to the chromosome. It is found in the telomere. Functionally, the COMPASS (Set1C) complex specifically mono-, di- and trimethylates histone H3 to form H3K4me1/2/3, which subsequently plays a role in telomere length maintenance and transcription elongation regulation. COMPASS recognizes ubiquitinated H2B on one face of the nucleosome which stimulates the methylation of H3 on the opposing face. SWD3/CPS30 establishes COMPASS trimethylation activity and may also serve as the anchor point to properly tether and space the other subunits. This chain is COMPASS component SWD3, found in Saccharomyces cerevisiae (strain ATCC 204508 / S288c) (Baker's yeast).